The chain runs to 389 residues: Alanine racemase 1 (389 aa).

Lys-41 functions as the Proton acceptor; specific for D-alanine in the catalytic mechanism. Residue Lys-41 is modified to N6-(pyridoxal phosphate)lysine. Substrate is bound at residue Arg-137. Tyr-266 acts as the Proton acceptor; specific for L-alanine in catalysis. Met-313 contacts substrate.

This sequence belongs to the alanine racemase family. Pyridoxal 5'-phosphate is required as a cofactor.

It carries out the reaction L-alanine = D-alanine. The protein operates within amino-acid biosynthesis; D-alanine biosynthesis; D-alanine from L-alanine: step 1/1. Catalyzes the interconversion of L-alanine and D-alanine. May also act on other amino acids. The protein is Alanine racemase 1 (alr1) of Bacillus subtilis (strain 168).